The sequence spans 106 residues: Large ribosomal subunit protein uL24 (106 aa).

Belongs to the universal ribosomal protein uL24 family. Part of the 50S ribosomal subunit.

Functionally, one of two assembly initiator proteins, it binds directly to the 5'-end of the 23S rRNA, where it nucleates assembly of the 50S subunit. In terms of biological role, one of the proteins that surrounds the polypeptide exit tunnel on the outside of the subunit. This Desulforamulus reducens (strain ATCC BAA-1160 / DSM 100696 / MI-1) (Desulfotomaculum reducens) protein is Large ribosomal subunit protein uL24.